Reading from the N-terminus, the 160-residue chain is Protein-export protein SecB (160 aa).

It belongs to the SecB family. As to quaternary structure, homotetramer, a dimer of dimers. One homotetramer interacts with 1 SecA dimer.

Its subcellular location is the cytoplasm. Functionally, one of the proteins required for the normal export of preproteins out of the cell cytoplasm. It is a molecular chaperone that binds to a subset of precursor proteins, maintaining them in a translocation-competent state. It also specifically binds to its receptor SecA. The chain is Protein-export protein SecB from Beijerinckia indica subsp. indica (strain ATCC 9039 / DSM 1715 / NCIMB 8712).